A 545-amino-acid chain; its full sequence is Sterol O-acyltransferase 1 (545 aa).

Residue M1 is modified to N-acetylmethionine. The disordered stretch occupies residues 1 to 24 (MVGEETSLRNRLSRSAENPEQDEA). Over 1–133 (MVGEETSLRN…LDELFEVDHI (133 aa)) the chain is Cytoplasmic. A Phosphoserine modification is found at S7. The segment covering 9 to 18 (RNRLSRSAEN) has biased composition (polar residues). Position 132 (H132) interacts with cholesterol. The helical transmembrane segment at 134-155 (RTIYHMFIALLIIFILSTLVVD) threads the bilayer. Over 156–175 (YIDEGRLVLEFSLLAYAFGQ) the chain is Lumenal. A helical membrane pass occupies residues 176-201 (FPIVIWTWWAMFLSTLAIPYFLFQRW). Residues 202–213 (AHGYSKSSHPLI) lie on the Cytoplasmic side of the membrane. Residues 214–239 (YSLIHGAFFLVFQLGILGFIPTYVVL) form a helical membrane-spanning segment. Topologically, residues 240–247 (AYTLPPAS) are lumenal. A helical transmembrane segment spans residues 248 to 271 (RFILILEQIRLVMKAHSYVRENVP). The Cytoplasmic segment spans residues 272 to 314 (RVLSAAKEKSSTVPVPTVNQYLYFLFAPTLIYRDSYPRTPTVR). A helical transmembrane segment spans residues 315 to 347 (WGYVAMQFLQVFGCLFYVYYIFERLCAPLFRNI). Over 348–364 (KQEPFSARVLVLCVFNS) the chain is Lumenal. A helical membrane pass occupies residues 365–390 (ILPGVLMLFLSFFAFLHCWLNAFAEM). Residues 391–438 (LRFGDRMFYKDWWNSTSYSNYYRTWNVVVHDWLYYYVYKDLLWFFSKR) are Cytoplasmic-facing. Positions 398-404 (FYKDWWN) match the FYXDWWN motif motif. N410, R413, N416, H420, Y428, and S451 together coordinate an acyl-CoA. Residues 439–463 (FRPAAMLAVFALSAVVHEYALAVCL) form a helical membrane-spanning segment. Residue H455 is part of the active site. Residues 464-469 (SYFYPV) lie on the Lumenal side of the membrane. The chain crosses the membrane as a helical span at residues 470–485 (LFVLFMFFGMAFNFIV). Over 486-491 (NDSRKR) the chain is Cytoplasmic. The helical transmembrane segment at 492-523 (PVWNIMVRASLFLGHGVILCFYSQEWYARQRC) threads the bilayer. A disulfide bridge links C523 with C541. Topologically, residues 524 to 545 (PLKNPTFLDYVRPRTWTCRYVF) are lumenal.

Belongs to the membrane-bound acyltransferase family. Sterol o-acyltransferase subfamily. In terms of assembly, may form homo- or heterodimers. Interacts with UBIAD1.

It is found in the endoplasmic reticulum membrane. The enzyme catalyses a sterol + a long-chain fatty acyl-CoA = a long-chain 3-hydroxysterol ester + CoA. The catalysed reaction is cholesterol + an acyl-CoA = a cholesterol ester + CoA. It catalyses the reaction cholesterol + (9Z)-octadecenoyl-CoA = cholesteryl (9Z-octadecenoate) + CoA. It carries out the reaction cholesterol + hexadecanoyl-CoA = cholesteryl hexadecanoate + CoA. The enzyme catalyses octadecanoyl-CoA + cholesterol = cholesteryl octadecanoate + CoA. The catalysed reaction is (9Z,12Z)-octadecadienoyl-CoA + cholesterol = cholesteryl (9Z,12Z)-octadecadienoate + CoA. It catalyses the reaction (5Z,8Z,11Z,14Z)-eicosatetraenoyl-CoA + cholesterol = cholesteryl (5Z,8Z,11Z,14Z)-eicosatetraenoate + CoA. It carries out the reaction (9Z)-hexadecenoyl-CoA + cholesterol = cholesteryl (9Z)-hexadecenoate + CoA. The enzyme catalyses (11Z)-octadecenoyl-CoA + cholesterol = cholesteryl (11Z)-octadecenoate + CoA. The catalysed reaction is (7Z)-octadecenoyl-CoA + cholesterol = cholesteryl (7Z)-octadecenoate + CoA. Functionally, catalyzes the formation of fatty acid-cholesterol esters, which are less soluble in membranes than cholesterol. Plays a role in lipoprotein assembly and dietary cholesterol absorption. Preferentially utilizes oleoyl-CoA ((9Z)-octadecenoyl-CoA) as substrate: shows a higher activity towards an acyl-CoA substrate with a double bond at the delta-9 position (9Z) than towards saturated acyl-CoA or an unsaturated acyl-CoA with a double bond at the delta-7 (7Z) or delta-11 (11Z) positions. This is Sterol O-acyltransferase 1 from Rattus norvegicus (Rat).